The following is a 302-amino-acid chain: MRIAPSLLSTAIVAALLSAPVVADELTGTLKKIKETGTITLGHRDASIPFSYLGTEPGKPIGYSHDLQLKVVEAVKKELNLPELKVRYNLVTSQTRIPLVQNGTVDIECGSTTNNEERQKQVDFSVGIFEVGTRLLSKKTANIKDFDDLKGKNVVTTAGTTSERLLKAMNADKKMGMNIISAKDHGESFMMLESGRAVAFMMDDALLYGEMAKAKKPDDWVVGGTPQSFEIYGCMVRKGDAAFKKVVDKAITDTYASGEVNKIYDKWFTQPIPPKGLNLNFPMSEELKKLIASPTDKAAEQM.

The N-terminal stretch at 1 to 23 (MRIAPSLLSTAIVAALLSAPVVA) is a signal peptide.

It belongs to the bacterial solute-binding protein 3 family.

It is found in the periplasm. Binds L-glutamate and L-aspartate. The protein is L-glutamate/L-aspartate-binding protein of Pseudomonas aeruginosa (strain ATCC 15692 / DSM 22644 / CIP 104116 / JCM 14847 / LMG 12228 / 1C / PRS 101 / PAO1).